Consider the following 357-residue polypeptide: RNA 3'-terminal phosphate cyclase (357 aa).

ATP contacts are provided by residues Gln-102 and 293-296 (HMGD). Residue His-319 is the Tele-AMP-histidine intermediate of the active site.

Belongs to the RNA 3'-terminal cyclase family. Type 1 subfamily.

The protein resides in the cytoplasm. The catalysed reaction is a 3'-end 3'-phospho-ribonucleotide-RNA + ATP = a 3'-end 2',3'-cyclophospho-ribonucleotide-RNA + AMP + diphosphate. Its function is as follows. Catalyzes the conversion of 3'-phosphate to a 2',3'-cyclic phosphodiester at the end of RNA. The mechanism of action of the enzyme occurs in 3 steps: (A) adenylation of the enzyme by ATP; (B) transfer of adenylate to an RNA-N3'P to produce RNA-N3'PP5'A; (C) and attack of the adjacent 2'-hydroxyl on the 3'-phosphorus in the diester linkage to produce the cyclic end product. The biological role of this enzyme is unknown but it is likely to function in some aspects of cellular RNA processing. The polypeptide is RNA 3'-terminal phosphate cyclase (Desulfurococcus amylolyticus (strain DSM 18924 / JCM 16383 / VKM B-2413 / 1221n) (Desulfurococcus kamchatkensis)).